The chain runs to 373 residues: 3 beta-hydroxysteroid dehydrogenase/Delta 5--&gt;4-isomerase type 2 (373 aa).

Catalysis depends on Tyr155, which acts as the Proton acceptor. Position 159 (Lys159) interacts with NAD(+). The helical transmembrane segment at 288–308 (VALLYWLGFLLELVNFLLRPV) threads the bilayer.

Belongs to the 3-beta-HSD family. High levels in adrenal gland, kidney and male liver. Low levels in female liver.

The protein resides in the endoplasmic reticulum membrane. It is found in the mitochondrion membrane. It carries out the reaction a 3beta-hydroxy-Delta(5)-steroid + NAD(+) = a 3-oxo-Delta(5)-steroid + NADH + H(+). The catalysed reaction is a 3-oxo-Delta(5)-steroid = a 3-oxo-Delta(4)-steroid. It catalyses the reaction pregnenolone + NAD(+) = pregn-5-ene-3,20-dione + NADH + H(+). The enzyme catalyses pregn-5-ene-3,20-dione = progesterone. It carries out the reaction 3beta-hydroxyandrost-5-en-17-one + NAD(+) = androst-5-ene-3,17-dione + NADH + H(+). The catalysed reaction is androst-5-ene-3,17-dione = androst-4-ene-3,17-dione. The protein operates within lipid metabolism; steroid biosynthesis. Functionally, 3-beta-HSD is a bifunctional enzyme, that catalyzes the oxidative conversion of Delta(5)-ene-3-beta-hydroxy steroid, and the oxidative conversion of ketosteroids. The 3-beta-HSD enzymatic system plays a crucial role in the biosynthesis of all classes of hormonal steroids. The sequence is that of 3 beta-hydroxysteroid dehydrogenase/Delta 5--&gt;4-isomerase type 2 (HSD3B2) from Mesocricetus auratus (Golden hamster).